The primary structure comprises 460 residues: ATP synthase subunit beta (460 aa).

G150–T157 contributes to the ATP binding site.

It belongs to the ATPase alpha/beta chains family. F-type ATPases have 2 components, CF(1) - the catalytic core - and CF(0) - the membrane proton channel. CF(1) has five subunits: alpha(3), beta(3), gamma(1), delta(1), epsilon(1). CF(0) has three main subunits: a(1), b(2) and c(9-12). The alpha and beta chains form an alternating ring which encloses part of the gamma chain. CF(1) is attached to CF(0) by a central stalk formed by the gamma and epsilon chains, while a peripheral stalk is formed by the delta and b chains.

Its subcellular location is the cell inner membrane. It carries out the reaction ATP + H2O + 4 H(+)(in) = ADP + phosphate + 5 H(+)(out). Its function is as follows. Produces ATP from ADP in the presence of a proton gradient across the membrane. The catalytic sites are hosted primarily by the beta subunits. This Enterobacter sp. (strain 638) protein is ATP synthase subunit beta.